Reading from the N-terminus, the 416-residue chain is D-amino acid dehydrogenase (416 aa).

Isoleucine 3–tyrosine 17 serves as a coordination point for FAD.

Belongs to the DadA oxidoreductase family. Requires FAD as cofactor.

It carries out the reaction a D-alpha-amino acid + A + H2O = a 2-oxocarboxylate + AH2 + NH4(+). Its function is as follows. Oxidative deamination of D-amino acids. The chain is D-amino acid dehydrogenase from Brucella suis biovar 1 (strain 1330).